An 820-amino-acid polypeptide reads, in one-letter code: Leucine--tRNA ligase (820 aa).

The short motif at 40–51 (PYPSGAGLHVGH) is the 'HIGH' region element. The 'KMSKS' region motif lies at 601 to 605 (KMSKS). Residue lysine 604 coordinates ATP.

This sequence belongs to the class-I aminoacyl-tRNA synthetase family.

It is found in the cytoplasm. It carries out the reaction tRNA(Leu) + L-leucine + ATP = L-leucyl-tRNA(Leu) + AMP + diphosphate. In Chlamydia caviae (strain ATCC VR-813 / DSM 19441 / 03DC25 / GPIC) (Chlamydophila caviae), this protein is Leucine--tRNA ligase.